Consider the following 835-residue polypeptide: Protein translocase subunit SecA (835 aa).

Residues Gln-85, 103–107 (GEGKT), and Asp-492 contribute to the ATP site. The disordered stretch occupies residues 788 to 807 (VQGEAVHPSSDGEEAKKKPV). Cys-819, Cys-821, Cys-830, and Cys-831 together coordinate Zn(2+).

The protein belongs to the SecA family. In terms of assembly, monomer and homodimer. Part of the essential Sec protein translocation apparatus which comprises SecA, SecYEG and auxiliary proteins SecDF. Other proteins may also be involved. Zn(2+) serves as cofactor.

Its subcellular location is the cell membrane. It localises to the cytoplasm. It catalyses the reaction ATP + H2O + cellular proteinSide 1 = ADP + phosphate + cellular proteinSide 2.. Functionally, part of the Sec protein translocase complex. Interacts with the SecYEG preprotein conducting channel. Has a central role in coupling the hydrolysis of ATP to the transfer of proteins into and across the cell membrane, serving as an ATP-driven molecular motor driving the stepwise translocation of polypeptide chains across the membrane. The protein is Protein translocase subunit SecA of Bacillus cereus (strain G9842).